The primary structure comprises 249 residues: MSKQNQWIVGVNAVASSVENDADNVREVLIEAGSKNPRLTEIEEQARRKGIDVRRVNTQALDGVGGQVRHQGVAARYAAARLWAENELEGLVEAAAGRALVLILDGVQDPHNLGACLRSAAAAGVTAVVIPKDKSATVNATVRKTSAGAADRIPVVAVTNLARCLRDLQKQGVWLYGLAGEAEASLYSVDLRGNVGLVLGGEADGLRRLTREHCDGLVKIPMPGEIESLNVSVATGVTLFEAVRQRLGA.

Residues G200, I220, and L229 each coordinate S-adenosyl-L-methionine.

This sequence belongs to the class IV-like SAM-binding methyltransferase superfamily. RNA methyltransferase TrmH family. RlmB subfamily.

It localises to the cytoplasm. It carries out the reaction guanosine(2251) in 23S rRNA + S-adenosyl-L-methionine = 2'-O-methylguanosine(2251) in 23S rRNA + S-adenosyl-L-homocysteine + H(+). In terms of biological role, specifically methylates the ribose of guanosine 2251 in 23S rRNA. This Xanthomonas axonopodis pv. citri (strain 306) protein is 23S rRNA (guanosine-2'-O-)-methyltransferase RlmB.